The chain runs to 691 residues: Inactive TPR repeat-containing thioredoxin TTL3 (691 aa).

Disordered stretches follow at residues 1–153 and 174–209; these read MSHS…AVSP and MASR…TSGK. Ser-8 carries the phosphoserine modification. Residues 19–39 show a composition bias toward basic and acidic residues; sequence RFRDLQRNDDDVNKPDFRELD. Residues Ser-42 and Ser-45 each carry the phosphoserine modification. Residues 51 to 79 show a composition bias toward low complexity; sequence GSASSSAAATPTSSSGSSGSASGKPSVSS. Residues 83–93 show a composition bias toward basic and acidic residues; the sequence is KRLDDAYKSHS. Polar residues-rich tracts occupy residues 94 to 108, 118 to 140, and 175 to 189; these read GELS…TTTR, SSTG…HTSP, and ASRT…CTGT. TPR repeat units lie at residues 220-253, 255-287, 289-321, 327-362, 412-445, 458-491, 492-525, and 527-559; these read PEEL…SPGN, AYRS…DPSY, RAHQ…PDQA, QTLE…GADS, AYVL…DQTN, VVRA…DDSN, SVLY…QPSY, and KALL…LPGD. Positions 596–683 constitute a Thioredoxin domain; the sequence is DKFKKSVALP…MVCPSHQFLE (88 aa).

In terms of assembly, interacts with BRL2. In terms of tissue distribution, expressed in embryos and organ primordia in shoot and root. In primary and cauline leaves and petals, is expressed in hydathodes, guard cells, petiole cells and cells associated with differentiating vascular bundles.

Involved in osmotic and salt stress tolerance. May play a role in the control of meristematic cell size during osmotic stress. May function as an adapter protein for BRL2 and may be required for signaling affecting leaf vascular tissue pattern formation. This Arabidopsis thaliana (Mouse-ear cress) protein is Inactive TPR repeat-containing thioredoxin TTL3.